The following is a 214-amino-acid chain: Heat shock 70 kDa protein cognate 1 (214 aa).

It belongs to the heat shock protein 70 family.

The sequence is that of Heat shock 70 kDa protein cognate 1 (Hsc70-1) from Drosophila simulans (Fruit fly).